Reading from the N-terminus, the 852-residue chain is Phenylalanine--tRNA ligase beta subunit (852 aa).

One can recognise a tRNA-binding domain in the interval 44-159; that stretch reads PETTGPLVIG…DADLASANLK (116 aa). In terms of domain architecture, B5 spans 428-510; sequence PEMPMITIHT…RLEGLEDIPS (83 aa). Mg(2+) is bound by residues D488, D494, E497, and E498. The FDX-ACB domain maps to 758–851; that stretch reads SAFPAVLQDI…ATEKVGAQLR (94 aa).

It belongs to the phenylalanyl-tRNA synthetase beta subunit family. Type 1 subfamily. Tetramer of two alpha and two beta subunits. The cofactor is Mg(2+).

It is found in the cytoplasm. It catalyses the reaction tRNA(Phe) + L-phenylalanine + ATP = L-phenylalanyl-tRNA(Phe) + AMP + diphosphate + H(+). This chain is Phenylalanine--tRNA ligase beta subunit, found in Corynebacterium jeikeium (strain K411).